The primary structure comprises 548 residues: Guanine nucleotide-binding protein-like 3 (548 aa).

The span at 1–45 (MKRPKLKKGSKRLSCHKRYKIQKKVREHNRKARKEAKKSGTRKQK) shows a compositional bias: basic residues. The segment at 1-118 (MKRPKLKKGS…KKNKGTKAAE (118 aa)) is disordered. Positions 58 to 114 (AEILQEAQRRRQQEEELKQNRKLERQKEVAKRRKLDEKKKKNSEKREKRDNKKNKGT) form a coiled coil. The segment covering 64–107 (AQRRRQQEEELKQNRKLERQKEVAKRRKLDEKKKKNSEKREKRD) has biased composition (basic and acidic residues). Positions 125–305 (CRHVNKVLEQ…MLDSPALVVS (181 aa)) constitute a CP-type G domain. GTP-binding positions include 172–175 (NKAD), 256–263 (ANVGKSSV), and 298–301 (DSPA). The tract at residues 459–548 (RQLVEPEPIE…DAYDFNTDFV (90 aa)) is disordered. Residues 465–497 (EPIEEELEANDGEEDVEEEHEGSEEEEDEEVEQ) are compositionally biased toward acidic residues. The span at 501-523 (SAKEQEVVSAKEQEVVSAKEQDS) shows a compositional bias: basic and acidic residues. The span at 524–534 (KSAGPSVSFDQ) shows a compositional bias: polar residues.

This sequence belongs to the TRAFAC class YlqF/YawG GTPase family.

Its subcellular location is the nucleus. The protein localises to the nucleolus. Its function is as follows. May play a role in regulating cellular proliferation. The protein is Guanine nucleotide-binding protein-like 3 (gnl3) of Xenopus tropicalis (Western clawed frog).